A 193-amino-acid chain; its full sequence is NADH-quinone oxidoreductase subunit B (193 aa).

4 residues coordinate [4Fe-4S] cluster: Cys72, Cys73, Cys137, and Cys167.

It belongs to the complex I 20 kDa subunit family. As to quaternary structure, NDH-1 is composed of 14 different subunits. Subunits NuoB, C, D, E, F, and G constitute the peripheral sector of the complex. The cofactor is [4Fe-4S] cluster.

It localises to the cell inner membrane. The enzyme catalyses a quinone + NADH + 5 H(+)(in) = a quinol + NAD(+) + 4 H(+)(out). Its function is as follows. NDH-1 shuttles electrons from NADH, via FMN and iron-sulfur (Fe-S) centers, to quinones in the respiratory chain. Couples the redox reaction to proton translocation (for every two electrons transferred, four hydrogen ions are translocated across the cytoplasmic membrane), and thus conserves the redox energy in a proton gradient. This Brucella anthropi (strain ATCC 49188 / DSM 6882 / CCUG 24695 / JCM 21032 / LMG 3331 / NBRC 15819 / NCTC 12168 / Alc 37) (Ochrobactrum anthropi) protein is NADH-quinone oxidoreductase subunit B.